Reading from the N-terminus, the 370-residue chain is Putative 8-amino-7-oxononanoate synthase (370 aa).

A substrate-binding site is contributed by arginine 20. 95–96 provides a ligand contact to pyridoxal 5'-phosphate; the sequence is GY. Residue histidine 120 coordinates substrate. Residues serine 167, 192-195, and 223-226 contribute to the pyridoxal 5'-phosphate site; these read DDAH and TLSK. An N6-(pyridoxal phosphate)lysine modification is found at lysine 226. Substrate is bound at residue threonine 337.

The protein belongs to the class-II pyridoxal-phosphate-dependent aminotransferase family. BioF subfamily. In terms of assembly, homodimer. Requires pyridoxal 5'-phosphate as cofactor.

The catalysed reaction is 6-carboxyhexanoyl-[ACP] + L-alanine + H(+) = (8S)-8-amino-7-oxononanoate + holo-[ACP] + CO2. The protein operates within cofactor biosynthesis; biotin biosynthesis. Catalyzes the decarboxylative condensation of pimeloyl-[acyl-carrier protein] and L-alanine to produce 8-amino-7-oxononanoate (AON), [acyl-carrier protein], and carbon dioxide. This chain is Putative 8-amino-7-oxononanoate synthase (bioF), found in Methanococcus vannielii (strain ATCC 35089 / DSM 1224 / JCM 13029 / OCM 148 / SB).